We begin with the raw amino-acid sequence, 512 residues long: Putative ribose/galactose/methyl galactoside import ATP-binding protein 2 (512 aa).

2 ABC transporter domains span residues 14–251 (IALT…VGRQ) and 262–507 (TSGN…TQRE). An ATP-binding site is contributed by 46 to 53 (GENGAGKS).

The protein belongs to the ABC transporter superfamily. Carbohydrate importer 2 (CUT2) (TC 3.A.1.2) family.

Its subcellular location is the cell inner membrane. The catalysed reaction is D-ribose(out) + ATP + H2O = D-ribose(in) + ADP + phosphate + H(+). It carries out the reaction D-galactose(out) + ATP + H2O = D-galactose(in) + ADP + phosphate + H(+). Its function is as follows. Part of an ABC transporter complex involved in carbohydrate import. Could be involved in ribose, galactose and/or methyl galactoside import. Responsible for energy coupling to the transport system. This is Putative ribose/galactose/methyl galactoside import ATP-binding protein 2 from Burkholderia cenocepacia (strain HI2424).